Consider the following 181-residue polypeptide: Ribulose bisphosphate carboxylase small subunit, chloroplastic 1 (181 aa).

A chloroplast-targeting transit peptide spans 1 to 54 (MASSMLSSAAVVTSPAQATMVAPFTGLKSSSAFPVTRKANNDITSIVSNGGRVS).

The protein belongs to the RuBisCO small chain family. As to quaternary structure, heterohexadecamer of 8 large and 8 small subunits.

Its subcellular location is the plastid. The protein resides in the chloroplast. RuBisCO catalyzes two reactions: the carboxylation of D-ribulose 1,5-bisphosphate, the primary event in carbon dioxide fixation, as well as the oxidative fragmentation of the pentose substrate. Both reactions occur simultaneously and in competition at the same active site. Although the small subunit is not catalytic it is essential for maximal activity. The protein is Ribulose bisphosphate carboxylase small subunit, chloroplastic 1 of Brassica napus (Rape).